Reading from the N-terminus, the 316-residue chain is tRNA dimethylallyltransferase (316 aa).

12 to 19 serves as a coordination point for ATP; the sequence is GPTASGKT. 14–19 is a substrate binding site; the sequence is TASGKT. Interaction with substrate tRNA stretches follow at residues 37-40 and 161-165; these read DSAL and QRILR.

It belongs to the IPP transferase family. In terms of assembly, monomer. Requires Mg(2+) as cofactor.

It catalyses the reaction adenosine(37) in tRNA + dimethylallyl diphosphate = N(6)-dimethylallyladenosine(37) in tRNA + diphosphate. Its function is as follows. Catalyzes the transfer of a dimethylallyl group onto the adenine at position 37 in tRNAs that read codons beginning with uridine, leading to the formation of N6-(dimethylallyl)adenosine (i(6)A). This Idiomarina loihiensis (strain ATCC BAA-735 / DSM 15497 / L2-TR) protein is tRNA dimethylallyltransferase.